A 61-amino-acid polypeptide reads, in one-letter code: uncharacterized protein (61 aa).

This is an uncharacterized protein from Homo sapiens (Human).